The primary structure comprises 1372 residues: Collagen alpha-2(I) chain (1372 aa).

Positions 1–22 are cleaved as a signal peptide; the sequence is MLSFVDTRTLLLLAVTSCLATC. At Gln23 the chain carries Pyrrolidone carboxylic acid. Positions 23 to 85 are cleaved as a propeptide — N-terminal propeptide; it reads QYLQSGSVRK…PPGLTGNFAA (63 aa). The interval 28 to 1135 is disordered; the sequence is GSVRKGPTGD…DQPRSQPSLR (1108 aa). A compositionally biased stretch (pro residues) spans 59-77; the sequence is MGPPGPPGSPGPPGSPAPP. Lys90 carries the post-translational modification Allysine. Residues 95–146 are compositionally biased toward low complexity; that stretch reads GPGPMGLMGPRGPPGAVGAPGPQGFQGPAGEPGEPGQTGPAGPRGPAGSPGK. Over residues 147-161 the composition is skewed to basic and acidic residues; it reads AGEDGHPGKPGRPGE. Residue Lys183 is modified to 5-hydroxylysine; alternate. The O-linked (Gal...) hydroxylysine; alternate glycan is linked to Lys183. Composition is skewed to low complexity over residues 231-260, 285-299, 306-327, 336-351, 390-416, 476-495, and 519-537; these read VGAPGPAGARGSDGSVGPVGPAGPIGSAGP, AGPRGEVGLPGLSGP, PGTNGLTGAKGATGLPGVAGAP, PGPAGAAGATGARGLV, PGEAGSAGPAGPPGLRGSPGSRGLPGA, LPGIDGRPGPIGPAGPRGEA, and PGLAGARGAPGPDGNNGAQ. Positions 544-553 are enriched in gly residues; sequence GVQGGKGEQG. Positions 600–639 are enriched in low complexity; it reads PGESGAAGPSGPIGSRGPSGAPGPDGNKGEAGAVGAPGSA. The span at 640–649 shows a compositional bias: gly residues; it reads GASGPGGLPG. Low complexity-rich tracts occupy residues 681–716 and 725–743; these read RGIPGAVGAPGPAGASGDRGEAGAAGPSGPAGPRGS and PAGPNGFAGPAGAAGQPGA. A compositionally biased stretch (basic and acidic residues) spans 744-753; it reads KGEKGTKGPK. The segment covering 755 to 771 has biased composition (low complexity); sequence ENGIVGPTGSVGAAGPS. The span at 781 to 790 shows a compositional bias: gly residues; that stretch reads GSRGDGGPPG. Composition is skewed to low complexity over residues 792-801, 855-882, 905-927, 957-978, and 987-1007; these read TGFPGAAGRT, SGEPGTAGAPGTAGPQGLLGAPGILGLP, ISGPPGARGPPGAVGSPGVNGAP, PGSIGPTGAAGAPGPHGSVGPA, and PGPAGSVGPVGAVGPRGPSGP. Residues 1011 to 1022 are compositionally biased toward basic and acidic residues; it reads RGDKGEPGDKGH. Residues 1095–1107 are compositionally biased toward pro residues; the sequence is AGPPGPPGPPGPP. Residues 1126 to 1372 constitute a propeptide, C-terminal propeptide; that stretch reads DQPRSQPSLR…RVEVGPVCFK (247 aa). One can recognise a Fibrillar collagen NC1 domain in the interval 1139-1372; it reads YEVDATLKSL…RVEVGPVCFK (234 aa). 3 disulfides stabilise this stretch: Cys1169–Cys1201, Cys1209–Cys1370, and Cys1278–Cys1323. Residues Asp1187, Asn1189, Gln1190, Cys1192, and Asp1195 each coordinate Ca(2+). The N-linked (GlcNAc...) asparagine glycan is linked to Asn1273.

Belongs to the fibrillar collagen family. As to quaternary structure, trimers of one alpha 2(I) and two alpha 1(I) chains. Interacts (via C-terminus) with TMEM131 (via PapD-L domain); the interaction is direct and is involved in assembly and TRAPPIII ER-to-Golgi transport complex-dependent secretion of collagen. In terms of processing, prolines at the third position of the tripeptide repeating unit (G-X-Y) are hydroxylated in some or all of the chains. Expressed in kidney glomeruli.

The protein resides in the secreted. It is found in the extracellular space. Its subcellular location is the extracellular matrix. Functionally, type I collagen is a member of group I collagen (fibrillar forming collagen). In Mus musculus (Mouse), this protein is Collagen alpha-2(I) chain (Col1a2).